A 565-amino-acid polypeptide reads, in one-letter code: Membrane protein insertase YidC (565 aa).

The next 6 membrane-spanning stretches (helical) occupy residues 6–26 (VLLI…WGKN), 348–368 (LMAL…SLLH), 370–390 (WGWA…PLSA), 437–457 (GGCF…WVLV), 479–499 (PYFI…KLTP), and 516–536 (PLIF…YWVI).

This sequence belongs to the OXA1/ALB3/YidC family. Type 1 subfamily. As to quaternary structure, interacts with the Sec translocase complex via SecD. Specifically interacts with transmembrane segments of nascent integral membrane proteins during membrane integration.

It is found in the cell inner membrane. Its function is as follows. Required for the insertion and/or proper folding and/or complex formation of integral membrane proteins into the membrane. Involved in integration of membrane proteins that insert both dependently and independently of the Sec translocase complex, as well as at least some lipoproteins. Aids folding of multispanning membrane proteins. The sequence is that of Membrane protein insertase YidC from Xylella fastidiosa (strain 9a5c).